The sequence spans 274 residues: MIRLENVSYNYPDGTPALRNINIGIKKGEYIGITGKNGSGKSTLALHLNGLLRPQKGKVLVRGMDTGDFSKLQGIRKLVGIVFQNPETQFVGRTVEEDLAFGPENLCLPPIEIRKRVDRALAEIGLGKYRYRSPKTLSGGQGQCVALAGILTMEPDCLIFDEVTSMLDPDSGKAVLERVKRLHEKGKTIVYITHNLEELQAADRIIVMDRGKIVLEGTPENVLSDLSLRYLGLTPPSLIELAERLKNHGVAVPWEKTSSPSSFAEEICRLFLKT.

An ABC transporter domain is found at 2–235 (IRLENVSYNY…LSLRYLGLTP (234 aa)). 35–42 (GKNGSGKS) provides a ligand contact to ATP.

It belongs to the ABC transporter superfamily. Energy-coupling factor EcfA family. As to quaternary structure, forms a stable energy-coupling factor (ECF) transporter complex composed of 2 membrane-embedded substrate-binding proteins (S component), 2 ATP-binding proteins (A component) and 2 transmembrane proteins (T component).

The protein resides in the cell membrane. Functionally, ATP-binding (A) component of a common energy-coupling factor (ECF) ABC-transporter complex. Unlike classic ABC transporters this ECF transporter provides the energy necessary to transport a number of different substrates. The polypeptide is Energy-coupling factor transporter ATP-binding protein EcfA (Methanosarcina acetivorans (strain ATCC 35395 / DSM 2834 / JCM 12185 / C2A)).